A 104-amino-acid polypeptide reads, in one-letter code: Large ribosomal subunit protein bL21 (104 aa).

Belongs to the bacterial ribosomal protein bL21 family. In terms of assembly, part of the 50S ribosomal subunit. Contacts protein L20.

Its function is as follows. This protein binds to 23S rRNA in the presence of protein L20. The chain is Large ribosomal subunit protein bL21 from Thermodesulfovibrio yellowstonii (strain ATCC 51303 / DSM 11347 / YP87).